Consider the following 603-residue polypeptide: Adenine deaminase (603 aa).

Belongs to the metallo-dependent hydrolases superfamily. Adenine deaminase family. It depends on Mn(2+) as a cofactor.

The catalysed reaction is adenine + H2O + H(+) = hypoxanthine + NH4(+). The sequence is that of Adenine deaminase from Ruegeria pomeroyi (strain ATCC 700808 / DSM 15171 / DSS-3) (Silicibacter pomeroyi).